The sequence spans 366 residues: Sulfate/thiosulfate import ATP-binding protein CysA 2 (366 aa).

Positions leucine 14–valine 243 constitute an ABC transporter domain. An ATP-binding site is contributed by glycine 46 to threonine 53.

This sequence belongs to the ABC transporter superfamily. Sulfate/tungstate importer (TC 3.A.1.6) family. As to quaternary structure, the complex is composed of two ATP-binding proteins (CysA), two transmembrane proteins (CysT and CysW) and a solute-binding protein (CysP).

The protein resides in the cell inner membrane. The catalysed reaction is sulfate(out) + ATP + H2O = sulfate(in) + ADP + phosphate + H(+). It catalyses the reaction thiosulfate(out) + ATP + H2O = thiosulfate(in) + ADP + phosphate + H(+). In terms of biological role, part of the ABC transporter complex CysAWTP involved in sulfate/thiosulfate import. Responsible for energy coupling to the transport system. The chain is Sulfate/thiosulfate import ATP-binding protein CysA 2 from Chromobacterium violaceum (strain ATCC 12472 / DSM 30191 / JCM 1249 / CCUG 213 / NBRC 12614 / NCIMB 9131 / NCTC 9757 / MK).